The primary structure comprises 361 residues: Peptide chain release factor 1 (361 aa).

Gln-235 carries the post-translational modification N5-methylglutamine.

Belongs to the prokaryotic/mitochondrial release factor family. Methylated by PrmC. Methylation increases the termination efficiency of RF1.

Its subcellular location is the cytoplasm. In terms of biological role, peptide chain release factor 1 directs the termination of translation in response to the peptide chain termination codons UAG and UAA. The polypeptide is Peptide chain release factor 1 (Azoarcus sp. (strain BH72)).